The sequence spans 362 residues: 3-dehydroquinate synthase (362 aa).

Belongs to the archaeal-type DHQ synthase family.

The catalysed reaction is 2-amino-2,3,7-trideoxy-D-lyxo-hept-6-ulosonate + NAD(+) + H2O = 3-dehydroquinate + NH4(+) + NADH + H(+). Functionally, catalyzes the oxidative deamination and cyclization of 2-amino-3,7-dideoxy-D-threo-hept-6-ulosonic acid (ADH) to yield 3-dehydroquinate (DHQ), which is fed into the canonical shikimic pathway of aromatic amino acid biosynthesis. The polypeptide is 3-dehydroquinate synthase (Methanothrix thermoacetophila (strain DSM 6194 / JCM 14653 / NBRC 101360 / PT) (Methanosaeta thermophila)).